The chain runs to 123 residues: UPF0102 protein Pput_4400 (123 aa).

This sequence belongs to the UPF0102 family.

This Pseudomonas putida (strain ATCC 700007 / DSM 6899 / JCM 31910 / BCRC 17059 / LMG 24140 / F1) protein is UPF0102 protein Pput_4400.